An 894-amino-acid polypeptide reads, in one-letter code: LRR receptor-like serine/threonine-protein kinase IOS1 (894 aa).

Residues 1-23 form the signal peptide; the sequence is MAFSSCFLLVLLQIFSALLLCLA. Residues 24–515 are Extracellular-facing; sequence QDQSGFISLD…KKKKNTVIAP (492 aa). Residues Asn-48, Asn-95, Asn-137, Asn-179, Asn-223, Asn-230, Asn-260, Asn-287, Asn-309, Asn-338, Asn-399, Asn-441, Asn-462, and Asn-469 are each glycosylated (N-linked (GlcNAc...) asparagine). 2 LRR repeats span residues 431–457 and 459–479; these read LTSL…NMET and KLIN…LLDK. A helical transmembrane segment spans residues 516–536; that stretch reads VAASLVSVFLIGAGIVTFLIL. Over 537–894 the chain is Cytoplasmic; it reads KRKKRTKLGL…FTTELNPGAR (358 aa). Thr-577 is subject to Phosphothreonine. In terms of domain architecture, Protein kinase spans 586 to 858; the sequence is NNFERVLGRG…QVVMDLKECL (273 aa). ATP-binding positions include 592–600 and Lys-613; that span reads LGRGGFGVV. Tyr-658 carries the phosphotyrosine modification. The active-site Proton acceptor is Asp-710. Ser-744 is subject to Phosphoserine. 2 positions are modified to phosphothreonine: Thr-745 and Thr-750. A Phosphotyrosine modification is found at Tyr-758.

The protein belongs to the protein kinase superfamily. Ser/Thr protein kinase family. Homodimerization. Interacts with BAK1 and FLS2; triggers FLS2-BAK1 complex formation upon microbe-associated molecular patterns (MAMPs) treatment. Also binds to CERK1 and EFR. Expressed in roots, cotyledons, leaves, flowers and siliques.

The protein resides in the cell membrane. In terms of biological role, negatively regulates the abscisic acid (ABA) signaling pathway. Required for full susceptibility to filamentous (hemi)biotrophic oomycetes (e.g. H.arabidopsidis and P.parasitica) and fungal (e.g. E.cruciferarum) pathogens, probably by triggering the repression of ABA-sensitive COLD REGULATED and RESISTANCE TO DESICCATION genes during infection, but independently of immune responses. Involved in BAK1-dependent and BAK1-independent microbe-associated molecular patterns (MAMPs)-triggered immunity (PTI) leading to defense responses, including callose deposition and MAPK cascade activation, toward pathogenic bacteria (e.g. P.syringae). Required for chitin-mediated PTI. The chain is LRR receptor-like serine/threonine-protein kinase IOS1 from Arabidopsis thaliana (Mouse-ear cress).